The following is a 290-amino-acid chain: Enoyl-CoA hydratase, mitochondrial (290 aa).

The transit peptide at 1 to 27 (MATLRVLLSCVRGPLRPPVRCPAWRPF) directs the protein to the mitochondrion. Phosphothreonine is present on T46. 98–101 (ADIK) lines the substrate pocket. At K101 the chain carries N6-acetyllysine; alternate. K101 is subject to N6-succinyllysine; alternate. Phosphoserine is present on S114. N6-acetyllysine; alternate is present on K115. N6-succinyllysine; alternate is present on K115. K118 bears the N6-acetyllysine mark. G141 provides a ligand contact to substrate. Position 204 is an N6-succinyllysine (K204). K211 carries the post-translational modification N6-acetyllysine.

This sequence belongs to the enoyl-CoA hydratase/isomerase family. Homohexamer; dimer of trimers.

It is found in the mitochondrion matrix. The catalysed reaction is a (3S)-3-hydroxyacyl-CoA = a (2E)-enoyl-CoA + H2O. It carries out the reaction a (3E)-enoyl-CoA = a 4-saturated (2E)-enoyl-CoA. The enzyme catalyses (3E)-hexenoyl-CoA = (2E)-hexenoyl-CoA. It catalyses the reaction (3S)-3-hydroxybutanoyl-CoA = (2E)-butenoyl-CoA + H2O. The catalysed reaction is 3-hydroxyisovaleryl-CoA = 3-methylbut-2-enoyl-CoA + H2O. It carries out the reaction 3-hydroxypropanoyl-CoA = acryloyl-CoA + H2O. The enzyme catalyses 3-hydroxybutanoyl-CoA = (2E)-butenoyl-CoA + H2O. It catalyses the reaction 2-methylpropenoyl-CoA + H2O = (S)-3-hydroxyisobutanoyl-CoA. The catalysed reaction is (3S)-hydroxyhexanoyl-CoA = (2E)-hexenoyl-CoA + H2O. It carries out the reaction (3S)-hydroxydecanoyl-CoA = (2E)-decenoyl-CoA + H2O. The protein operates within lipid metabolism; fatty acid beta-oxidation. Its function is as follows. Converts unsaturated trans-2-enoyl-CoA species ((2E)-enoyl-CoA) to the corresponding (3S)-3-hydroxyacyl-CoA species through addition of a water molecule to the double bond. Catalyzes the hydration of medium- and short-chained fatty enoyl-CoA thioesters from 4 carbons long (C4) up to C16. Has high substrate specificity for crotonyl-CoA ((2E)-butenoyl-CoA) and moderate specificity for acryloyl-CoA, 3-methylcrotonyl-CoA (3-methyl-(2E)-butenoyl-CoA) and methacrylyl-CoA ((2E)-2-methylpropenoyl-CoA). Can bind tiglyl-CoA (2-methylcrotonoyl-CoA), but hydrates only a small amount of this substrate. Plays a key role in the beta-oxidation spiral of short- and medium-chain fatty acid oxidation. At a lower rate than the hydratase reaction, catalyzes the isomerase reaction of trans-3-enoyl-CoA species (such as (3E)-hexenoyl-CoA) to trans-2-enoyl-CoA species (such as (2E)-hexenoyl-CoA), which are subsequently hydrated to 3(S)-3-hydroxyacyl-CoA species (such as (3S)-hydroxyhexanoyl-CoA). This is Enoyl-CoA hydratase, mitochondrial (ECHS1) from Pongo abelii (Sumatran orangutan).